A 408-amino-acid polypeptide reads, in one-letter code: BTB/POZ and MATH domain-containing protein 3 (408 aa).

In terms of domain architecture, MATH spans 24 to 158 (NGSHQFTIQG…DDCLVINCTV (135 aa)). Residues 194 to 261 (CDIAFQVGDE…IYTDVLPNVH (68 aa)) form the BTB domain.

This sequence belongs to the Tdpoz family. In terms of assembly, homodimer or heterodimer with BPM3 and BPM5. Interacts with CUL3A and CUL3B. Interacts with RAP2-4 and RAP2-13. Binds to MYB56 at the promoter of FLOWERING LOCUS T (FT). Ubiquitous.

It localises to the nucleus. Its subcellular location is the cytoplasm. The protein operates within protein modification; protein ubiquitination. Functionally, may act as a substrate-specific adapter of an E3 ubiquitin-protein ligase complex (CUL3-RBX1-BTB) which mediates the ubiquitination and subsequent proteasomal degradation of target proteins. The polypeptide is BTB/POZ and MATH domain-containing protein 3 (Arabidopsis thaliana (Mouse-ear cress)).